Here is a 313-residue protein sequence, read N- to C-terminus: Interferon-inducible double-stranded RNA-dependent protein kinase activator A (313 aa).

The segment at Met1–Phe21 is disordered. Sufficient for self-association and interaction with TARBP2 stretches follow at residues Met1–Ala103, Asn102–Ile195, and Ile195–Lys313. Ser18 carries the post-translational modification Phosphoserine. DRBM domains lie at Thr34 to Ala101, Asn126 to Asn194, and Asp240 to Ile308. A phosphoserine mark is found at Ser167, Ser246, and Ser287.

The protein belongs to the PRKRA family. As to quaternary structure, homodimer. Interacts with EIF2AK2/PKR through its DRBM domains. Interacts with DICER1, AGO2 and TARBP2. Also able to interact with dsRNA. Interacts with UBC9. Forms a complex with UBC9 and p53/TP53. Interacts with DUS2L (via DRBM domain). Post-translationally, phosphorylated at Ser-246 in unstressed cells and at Ser-287 in stressed cells. Phosphorylation at Ser-246 appears to be a prerequisite for subsequent phosphorylation at Ser-287. Phosphorylation at Ser-246 and Ser-287 are necessary for activation of EIF2AK2/PKR under conditions of stress.

It localises to the cytoplasm. The protein localises to the perinuclear region. In terms of biological role, activates EIF2AK2/PKR in the absence of double-stranded RNA (dsRNA), leading to phosphorylation of EIF2S1/EFI2-alpha and inhibition of translation and induction of apoptosis. Required for siRNA production by DICER1 and for subsequent siRNA-mediated post-transcriptional gene silencing. Does not seem to be required for processing of pre-miRNA to miRNA by DICER1. Promotes UBC9-p53/TP53 association and sumoylation and phosphorylation of p53/TP53 at 'Lys-386' at 'Ser-392' respectively and enhances its activity in a EIF2AK2/PKR-dependent manner. This is Interferon-inducible double-stranded RNA-dependent protein kinase activator A (PRKRA) from Bos taurus (Bovine).